Reading from the N-terminus, the 166-residue chain is Heavy metal-associated isoprenylated plant protein 45 (166 aa).

The region spanning 15-78 is the HMA domain; the sequence is LSIVELLVDM…MVKRTGRTAE (64 aa). Residues C26 and C29 each contribute to the a metal cation site. Position 163 is a cysteine methyl ester (C163). Residue C163 is the site of S-farnesyl cysteine attachment. Residues 164 to 166 constitute a propeptide, removed in mature form; it reads TIM.

It belongs to the HIPP family.

Heavy-metal-binding protein. The sequence is that of Heavy metal-associated isoprenylated plant protein 45 from Arabidopsis thaliana (Mouse-ear cress).